An 83-amino-acid chain; its full sequence is Putative cytochrome b5 B11H24.095 (83 aa).

The Cytochrome b5 heme-binding domain occupies 2–78 (SQTFTKSQVA…GTKLKVGTLA (77 aa)). Residues His37 and His60 each contribute to the heme site.

It belongs to the cytochrome b5 family.

The protein is Putative cytochrome b5 B11H24.095 of Neurospora crassa (strain ATCC 24698 / 74-OR23-1A / CBS 708.71 / DSM 1257 / FGSC 987).